The sequence spans 45 residues: DNA-directed RNA polymerase subunit Rpo12 (45 aa).

Residues Cys-8, Cys-23, and Cys-26 each contribute to the Zn(2+) site.

Belongs to the archaeal Rpo12/eukaryotic RPC10 RNA polymerase subunit family. As to quaternary structure, part of the RNA polymerase complex. Requires Zn(2+) as cofactor.

It is found in the cytoplasm. It carries out the reaction RNA(n) + a ribonucleoside 5'-triphosphate = RNA(n+1) + diphosphate. Its function is as follows. DNA-dependent RNA polymerase (RNAP) catalyzes the transcription of DNA into RNA using the four ribonucleoside triphosphates as substrates. This Methanosarcina acetivorans (strain ATCC 35395 / DSM 2834 / JCM 12185 / C2A) protein is DNA-directed RNA polymerase subunit Rpo12.